Here is a 134-residue protein sequence, read N- to C-terminus: Cytochrome b (134 aa).

3 helical membrane passes run phenylalanine 33 to methionine 53, tryptophan 77 to valine 98, and tryptophan 113 to leucine 133. Histidine 83 and histidine 97 together coordinate heme b.

This sequence belongs to the cytochrome b family. In terms of assembly, the cytochrome bc1 complex contains 11 subunits: 3 respiratory subunits (MT-CYB, CYC1 and UQCRFS1), 2 core proteins (UQCRC1 and UQCRC2) and 6 low-molecular weight proteins (UQCRH/QCR6, UQCRB/QCR7, UQCRQ/QCR8, UQCR10/QCR9, UQCR11/QCR10 and a cleavage product of UQCRFS1). This cytochrome bc1 complex then forms a dimer. Heme b serves as cofactor.

It localises to the mitochondrion inner membrane. Its function is as follows. Component of the ubiquinol-cytochrome c reductase complex (complex III or cytochrome b-c1 complex) that is part of the mitochondrial respiratory chain. The b-c1 complex mediates electron transfer from ubiquinol to cytochrome c. Contributes to the generation of a proton gradient across the mitochondrial membrane that is then used for ATP synthesis. This Chiroderma salvini (Salvin's big-eyed bat) protein is Cytochrome b (MT-CYB).